A 389-amino-acid polypeptide reads, in one-letter code: Succinate--CoA ligase [ADP-forming] subunit beta (389 aa).

The 236-residue stretch at lysine 9–glutamate 244 folds into the ATP-grasp domain. ATP contacts are provided by residues lysine 46, glycine 53 to glycine 55, glutamate 99, glycine 102, and glutamate 107. Residues asparagine 199 and aspartate 213 each coordinate Mg(2+). Residues asparagine 264 and glycine 321–valine 323 contribute to the substrate site.

This sequence belongs to the succinate/malate CoA ligase beta subunit family. Heterotetramer of two alpha and two beta subunits. Mg(2+) serves as cofactor.

It carries out the reaction succinate + ATP + CoA = succinyl-CoA + ADP + phosphate. The enzyme catalyses GTP + succinate + CoA = succinyl-CoA + GDP + phosphate. Its pathway is carbohydrate metabolism; tricarboxylic acid cycle; succinate from succinyl-CoA (ligase route): step 1/1. Functionally, succinyl-CoA synthetase functions in the citric acid cycle (TCA), coupling the hydrolysis of succinyl-CoA to the synthesis of either ATP or GTP and thus represents the only step of substrate-level phosphorylation in the TCA. The beta subunit provides nucleotide specificity of the enzyme and binds the substrate succinate, while the binding sites for coenzyme A and phosphate are found in the alpha subunit. In Tolumonas auensis (strain DSM 9187 / NBRC 110442 / TA 4), this protein is Succinate--CoA ligase [ADP-forming] subunit beta.